A 300-amino-acid polypeptide reads, in one-letter code: Bidirectional sugar transporter SWEET12 (300 aa).

At 1–4 the chain is on the extracellular side; that stretch reads MVQA. A helical membrane pass occupies residues 5 to 25; the sequence is LVFAVGIVGNILSFLVILAPV. Positions 8–92 constitute a MtN3/slv 1 domain; that stretch reads AVGIVGNILS…TVYLLYAPRQ (85 aa). Over 26-38 the chain is Cytoplasmic; sequence PTFYRVYKKKSTE. Residues 39–61 traverse the membrane as a helical segment; that stretch reads SFQSVPYAVALLSAMLWLYYALL. The Extracellular segment spans residues 62-67; the sequence is TSDLLL. Residues 68 to 88 traverse the membrane as a helical segment; the sequence is LSINSIGCLVESLYLTVYLLY. Residues 89 to 99 lie on the Cytoplasmic side of the membrane; the sequence is APRQAMAFTLK. A helical transmembrane segment spans residues 100 to 120; that stretch reads LVCAMNLALFAAVVAALQLLV. Residues 121–128 are Extracellular-facing; the sequence is KATDRRVT. The helical transmembrane segment at 129–149 threads the bilayer; sequence LAGGIGASFALAVFVAPLTII. In terms of domain architecture, MtN3/slv 2 spans 131–213; that stretch reads GGIGASFALA…VLYVVYKNPK (83 aa). Residues 150–162 lie on the Cytoplasmic side of the membrane; the sequence is RQVIRTKSVEFMP. A helical transmembrane segment spans residues 163 to 183; sequence FWLSFFLTLSAVVWFFYGLLM. Over 184-185 the chain is Extracellular; that stretch reads KD. A helical membrane pass occupies residues 186–206; that stretch reads FFVATPNVLGLLFGLAQMVLY. Residues 207–300 are Cytoplasmic-facing; the sequence is VVYKNPKKNS…PPALPAVEVA (94 aa). Positions 256–300 are disordered; the sequence is ADLEAAAPATPQRPADDDAIDHRSVVVDIPPPPQPPPALPAVEVA. The segment covering 269–280 has biased composition (basic and acidic residues); the sequence is PADDDAIDHRSV. Pro residues predominate over residues 284 to 294; sequence IPPPPQPPPAL.

The protein belongs to the SWEET sugar transporter family. Forms homooligomers and/or heterooligomers.

The protein localises to the cell membrane. Its function is as follows. Mediates both low-affinity uptake and efflux of sugar across the plasma membrane. In terms of biological role, confers blight susceptibility. Confers TAL effector-mediated susceptibility to Xanthomonas oryzae pv. oryzae. This Oryza sativa subsp. japonica (Rice) protein is Bidirectional sugar transporter SWEET12 (SWEET12).